A 432-amino-acid chain; its full sequence is Adenylosuccinate synthetase (432 aa).

GTP-binding positions include 13–19 (GDEGKGK) and 41–43 (GHT). Asp14 (proton acceptor) is an active-site residue. 2 residues coordinate Mg(2+): Asp14 and Gly41. IMP is bound by residues 14 to 17 (DEGK), 39 to 42 (NAGH), Thr130, Arg144, Gln225, Thr240, and Arg304. The active-site Proton donor is His42. 300–306 (ATTGRRR) is a substrate binding site. Residues Arg306, 332 to 334 (KLD), and 415 to 417 (STG) contribute to the GTP site.

Belongs to the adenylosuccinate synthetase family. Homodimer. The cofactor is Mg(2+).

Its subcellular location is the cytoplasm. It carries out the reaction IMP + L-aspartate + GTP = N(6)-(1,2-dicarboxyethyl)-AMP + GDP + phosphate + 2 H(+). It functions in the pathway purine metabolism; AMP biosynthesis via de novo pathway; AMP from IMP: step 1/2. Functionally, plays an important role in the de novo pathway of purine nucleotide biosynthesis. Catalyzes the first committed step in the biosynthesis of AMP from IMP. The sequence is that of Adenylosuccinate synthetase from Citrobacter koseri (strain ATCC BAA-895 / CDC 4225-83 / SGSC4696).